A 399-amino-acid polypeptide reads, in one-letter code: Protein shisa-8 (399 aa).

A signal peptide spans 1-36 (MERAGARGQRCGRRSHGLPLALRLALLLAGSPSGRA). Over 37–136 (GAPEEQEIAG…APRDPARERS (100 aa)) the chain is Extracellular. Asn-73 carries an N-linked (GlcNAc...) asparagine glycan. Residues 137–157 (HTAVYAVCGVAALLVLVGIGA) traverse the membrane as a helical segment. At 158–399 (RLGLERAHSP…STNSKAEVTV (242 aa)) the chain is on the cytoplasmic side. Disordered stretches follow at residues 207–248 (GDGV…GGSL) and 378–399 (FYSSAGRGPRHLSTNSKAEVTV). Residues 389–399 (LSTNSKAEVTV) show a composition bias toward polar residues.

Belongs to the shisa family. Interacts with AMPAR subunits GRIA1 and GRIA2. In terms of tissue distribution, brain-specific. Highly expressed in cerebellum and olfactory bulb.

The protein localises to the membrane. May regulate trafficking and current kinetics of AMPA-type glutamate receptor (AMPAR) at synapses. The chain is Protein shisa-8 from Mus musculus (Mouse).